The primary structure comprises 457 residues: GTPase Era, mitochondrial (457 aa).

Residues 1–18 (MAFRVSISTFGKSLRVRR) constitute a mitochondrion transit peptide. One can recognise an Era-type G domain in the interval 107-350 (KVLRVAIIGA…RYLVVGAKPG (244 aa)). Positions 115–122 (GAPNAGKS) are G1. 115–122 (GAPNAGKS) provides a ligand contact to GTP. The G2 stretch occupies residues 141–145 (HTTRA). A G3 region spans residues 162-165 (DTPG). GTP contacts are provided by residues 162–166 (DTPGL) and 231–234 (NKVD). Residues 231-234 (NKVD) form a G4 region. A compositionally biased stretch (basic and acidic residues) spans 270-290 (AERRTDREARTSGSGDEEKPG). The interval 270 to 300 (AERRTDREARTSGSGDEEKPGGDVADGEGSE) is disordered. The segment at 328 to 330 (VSA) is G5. In terms of domain architecture, KH type-2 spans 376-457 (LLEYLPKEVP…KLRLSVKVKN (82 aa)).

The protein belongs to the TRAFAC class TrmE-Era-EngA-EngB-Septin-like GTPase superfamily. Era GTPase family.

Its subcellular location is the mitochondrion matrix. The protein resides in the mitochondrion inner membrane. Functionally, probable GTPase that plays a role in the mitochondrial ribosomal small subunit assembly. Specifically binds the 12S mitochondrial rRNA (12S mt-rRNA) to a 33 nucleotide section delineating the 3' terminal stem-loop region. May act as a chaperone that protects the 12S mt-rRNA on the 28S mitoribosomal subunit during ribosomal small subunit assembly. This is GTPase Era, mitochondrial (eral1) from Salmo salar (Atlantic salmon).